The sequence spans 255 residues: Phosphoribosyl isomerase A (255 aa).

Aspartate 21 serves as the catalytic Proton acceptor. The active-site Proton donor is aspartate 140.

This sequence belongs to the HisA/HisF family.

The protein localises to the cytoplasm. It catalyses the reaction 1-(5-phospho-beta-D-ribosyl)-5-[(5-phospho-beta-D-ribosylamino)methylideneamino]imidazole-4-carboxamide = 5-[(5-phospho-1-deoxy-D-ribulos-1-ylimino)methylamino]-1-(5-phospho-beta-D-ribosyl)imidazole-4-carboxamide. The enzyme catalyses N-(5-phospho-beta-D-ribosyl)anthranilate = 1-(2-carboxyphenylamino)-1-deoxy-D-ribulose 5-phosphate. The protein operates within amino-acid biosynthesis; L-histidine biosynthesis; L-histidine from 5-phospho-alpha-D-ribose 1-diphosphate: step 4/9. Its pathway is amino-acid biosynthesis; L-tryptophan biosynthesis; L-tryptophan from chorismate: step 3/5. Functionally, involved in both the histidine and tryptophan biosynthetic pathways. This is Phosphoribosyl isomerase A from Mycolicibacterium vanbaalenii (strain DSM 7251 / JCM 13017 / BCRC 16820 / KCTC 9966 / NRRL B-24157 / PYR-1) (Mycobacterium vanbaalenii).